Here is a 90-residue protein sequence, read N- to C-terminus: Large ribosomal subunit protein bL27 (90 aa).

Residues methionine 1–arginine 20 form a disordered region.

The protein belongs to the bacterial ribosomal protein bL27 family.

The protein is Large ribosomal subunit protein bL27 of Rhodopseudomonas palustris (strain BisB18).